We begin with the raw amino-acid sequence, 262 residues long: 5'-nucleotidase SurE (262 aa).

A divalent metal cation-binding residues include Asp9, Asp10, Ser40, and Asn95.

It belongs to the SurE nucleotidase family. It depends on a divalent metal cation as a cofactor.

The protein localises to the cytoplasm. It carries out the reaction a ribonucleoside 5'-phosphate + H2O = a ribonucleoside + phosphate. Its function is as follows. Nucleotidase that shows phosphatase activity on nucleoside 5'-monophosphates. This chain is 5'-nucleotidase SurE, found in Aliarcobacter butzleri (strain RM4018) (Arcobacter butzleri).